We begin with the raw amino-acid sequence, 143 residues long: 3-hydroxyacyl-[acyl-carrier-protein] dehydratase FabZ (143 aa).

H49 is an active-site residue.

The protein belongs to the thioester dehydratase family. FabZ subfamily.

The protein localises to the cytoplasm. The enzyme catalyses a (3R)-hydroxyacyl-[ACP] = a (2E)-enoyl-[ACP] + H2O. In terms of biological role, involved in unsaturated fatty acids biosynthesis. Catalyzes the dehydration of short chain beta-hydroxyacyl-ACPs and long chain saturated and unsaturated beta-hydroxyacyl-ACPs. The protein is 3-hydroxyacyl-[acyl-carrier-protein] dehydratase FabZ of Wolbachia pipientis wMel.